A 194-amino-acid chain; its full sequence is Imidazole glycerol phosphate synthase subunit HisH (194 aa).

One can recognise a Glutamine amidotransferase type-1 domain in the interval 1–194 (MIIIDTGCAN…QLLKNFVENL (194 aa)). Cysteine 75 (nucleophile) is an active-site residue. Catalysis depends on residues histidine 175 and glutamate 177.

Heterodimer of HisH and HisF.

It localises to the cytoplasm. It catalyses the reaction 5-[(5-phospho-1-deoxy-D-ribulos-1-ylimino)methylamino]-1-(5-phospho-beta-D-ribosyl)imidazole-4-carboxamide + L-glutamine = D-erythro-1-(imidazol-4-yl)glycerol 3-phosphate + 5-amino-1-(5-phospho-beta-D-ribosyl)imidazole-4-carboxamide + L-glutamate + H(+). The catalysed reaction is L-glutamine + H2O = L-glutamate + NH4(+). Its pathway is amino-acid biosynthesis; L-histidine biosynthesis; L-histidine from 5-phospho-alpha-D-ribose 1-diphosphate: step 5/9. Its function is as follows. IGPS catalyzes the conversion of PRFAR and glutamine to IGP, AICAR and glutamate. The HisH subunit catalyzes the hydrolysis of glutamine to glutamate and ammonia as part of the synthesis of IGP and AICAR. The resulting ammonia molecule is channeled to the active site of HisF. This chain is Imidazole glycerol phosphate synthase subunit HisH, found in Mannheimia succiniciproducens (strain KCTC 0769BP / MBEL55E).